The primary structure comprises 363 residues: Mitogen-activated protein kinase 13 (363 aa).

A Protein kinase domain is found at 33–319; the sequence is IPPIEPIGRG…VDEALKQPYL (287 aa). Residues 39 to 47 and K62 contribute to the ATP site; that span reads IGRGAYGIV. D159 acts as the Proton acceptor in catalysis. Position 191 is a phosphothreonine (T191). A TXY motif is present at residues 191-193; that stretch reads TEY. A Phosphotyrosine modification is found at Y193. A Phosphothreonine modification is found at T196.

Belongs to the protein kinase superfamily. CMGC Ser/Thr protein kinase family. MAP kinase subfamily. As to quaternary structure, interacts with MKK6. In terms of processing, dually phosphorylated on Thr-191 and Tyr-193, which activates the enzyme. As to expression, expressed in roots, stems and flower buds.

The enzyme catalyses L-seryl-[protein] + ATP = O-phospho-L-seryl-[protein] + ADP + H(+). It carries out the reaction L-threonyl-[protein] + ATP = O-phospho-L-threonyl-[protein] + ADP + H(+). Activated by threonine and tyrosine phosphorylation. Activated by the MAP kinase kinase MKK6 in vitro. In terms of biological role, MKK6-MPK13 module positively regulates lateral root formation. The protein is Mitogen-activated protein kinase 13 (MPK13) of Arabidopsis thaliana (Mouse-ear cress).